We begin with the raw amino-acid sequence, 60 residues long: Large ribosomal subunit protein uL30 (60 aa).

Belongs to the universal ribosomal protein uL30 family. As to quaternary structure, part of the 50S ribosomal subunit.

The chain is Large ribosomal subunit protein uL30 from Streptococcus pneumoniae serotype 2 (strain D39 / NCTC 7466).